We begin with the raw amino-acid sequence, 302 residues long: Digeranylgeranylglyceryl phosphate synthase (302 aa).

The next 8 membrane-spanning stretches (helical) occupy residues 21 to 41 (LVVA…IYGG), 43 to 63 (IVSS…AGGY), 103 to 123 (IGLI…FAVL), 144 to 164 (IVIA…ASCM), 167 to 187 (GKVV…LLVL), 218 to 238 (AYMA…FPYI), 244 to 264 (MAYL…LAIL), and 282 to 302 (ARSA…AGLM).

It belongs to the UbiA prenyltransferase family. DGGGP synthase subfamily. Mg(2+) serves as cofactor.

The protein resides in the cell membrane. The enzyme catalyses sn-3-O-(geranylgeranyl)glycerol 1-phosphate + (2E,6E,10E)-geranylgeranyl diphosphate = 2,3-bis-O-(geranylgeranyl)-sn-glycerol 1-phosphate + diphosphate. It functions in the pathway membrane lipid metabolism; glycerophospholipid metabolism. Functionally, prenyltransferase that catalyzes the transfer of the geranylgeranyl moiety of geranylgeranyl diphosphate (GGPP) to the C2 hydroxyl of (S)-3-O-geranylgeranylglyceryl phosphate (GGGP). This reaction is the second ether-bond-formation step in the biosynthesis of archaeal membrane lipids. The sequence is that of Digeranylgeranylglyceryl phosphate synthase from Hyperthermus butylicus (strain DSM 5456 / JCM 9403 / PLM1-5).